Reading from the N-terminus, the 1186-residue chain is Tricalbin-1 (1186 aa).

Positions 1-50 are disordered; the sequence is MAKEDTGVTAPKKPETAQVANINGIDKLEPPKTKEETESSKSVSSEKAAH. Residues 1–106 are Cytoplasmic-facing; sequence MAKEDTGVTA…NIIPDSLYGD (106 aa). Basic and acidic residues predominate over residues 26 to 39; it reads DKLEPPKTKEETES. The helical transmembrane segment at 107 to 127 threads the bilayer; the sequence is WYHSVAIFFIGGVASFALGHY. A topological domain (extracellular) is located at residue lysine 128. Residues 129-149 traverse the membrane as a helical segment; sequence FSMGSAFFVIVITSLLYRTSA. The Cytoplasmic portion of the chain corresponds to 150–1186; sequence KKYRGSIREL…HEMGEEETKF (1037 aa). The region spanning 172 to 375 is the SMP-LTD domain; it reads DYESLEWLNA…PPFSLQLNIP (204 aa). 3 consecutive C2 domains span residues 366 to 487, 512 to 636, and 640 to 757; these read PPFS…RNLK, EKKL…IKIT, and RPVR…DKYE. The stretch at 795-822 forms a coiled coil; sequence LEEIQDLDKVNKKKKALELRKSAIDEKK. A C2 4 domain is found at 976–1094; it reads PIDTKQLPAN…KVEGTTELDV (119 aa). Serine 1000 is subject to Phosphoserine. The Ca(2+) site is built by aspartate 1008, aspartate 1014, aspartate 1064, aspartate 1066, serine 1069, and aspartate 1072.

The protein belongs to the tricalbin family. In terms of assembly, interacts with TCB2 via its C-terminal domain. Requires Ca(2+) as cofactor.

The protein resides in the cell membrane. It localises to the endoplasmic reticulum membrane. Its function is as follows. May play a role in membrane trafficking. This chain is Tricalbin-1 (TCB1), found in Saccharomyces cerevisiae (strain ATCC 204508 / S288c) (Baker's yeast).